Consider the following 141-residue polypeptide: SsrA-binding protein (141 aa).

This sequence belongs to the SmpB family.

The protein localises to the cytoplasm. Required for rescue of stalled ribosomes mediated by trans-translation. Binds to transfer-messenger RNA (tmRNA), required for stable association of tmRNA with ribosomes. tmRNA and SmpB together mimic tRNA shape, replacing the anticodon stem-loop with SmpB. tmRNA is encoded by the ssrA gene; the 2 termini fold to resemble tRNA(Ala) and it encodes a 'tag peptide', a short internal open reading frame. During trans-translation Ala-aminoacylated tmRNA acts like a tRNA, entering the A-site of stalled ribosomes, displacing the stalled mRNA. The ribosome then switches to translate the ORF on the tmRNA; the nascent peptide is terminated with the 'tag peptide' encoded by the tmRNA and targeted for degradation. The ribosome is freed to recommence translation, which seems to be the essential function of trans-translation. The protein is SsrA-binding protein of Ureaplasma parvum serovar 3 (strain ATCC 27815 / 27 / NCTC 11736).